Here is a 157-residue protein sequence, read N- to C-terminus: Transcriptional repressor NrdR (157 aa).

A zinc finger spans residues cysteine 3–cysteine 34. Positions leucine 46–aspartate 136 constitute an ATP-cone domain.

It belongs to the NrdR family. The cofactor is Zn(2+).

In terms of biological role, negatively regulates transcription of bacterial ribonucleotide reductase nrd genes and operons by binding to NrdR-boxes. This chain is Transcriptional repressor NrdR, found in Clavibacter sepedonicus (Clavibacter michiganensis subsp. sepedonicus).